Reading from the N-terminus, the 420-residue chain is L-glutamine:2-deoxy-scyllo-inosose aminotransferase (420 aa).

Lys201 bears the N6-(pyridoxal phosphate)lysine mark.

The protein belongs to the DegT/DnrJ/EryC1 family. L-glutamine:2-deoxy-scyllo-inosose/scyllo-inosose aminotransferase subfamily. Pyridoxal 5'-phosphate is required as a cofactor.

It catalyses the reaction 2-deoxy-L-scyllo-inosose + L-glutamine = 2-deoxy-scyllo-inosamine + 2-oxoglutaramate. The enzyme catalyses 3-amino-2,3-dideoxy-scyllo-inosose + L-glutamine = 2-deoxystreptamine + 2-oxoglutaramate. The protein operates within metabolic intermediate biosynthesis; 2-deoxystreptamine biosynthesis; 2-deoxystreptamine from D-glucose 6-phosphate: step 2/4. It functions in the pathway antibiotic biosynthesis; gentamicin biosynthesis. Catalyzes the PLP-dependent transamination of 2-deoxy-scyllo-inosose (2-DOI) to form 2-deoxy-scyllo-inosamine (2-DOIA) using L-glutamine as the amino donor. Also catalyzes the transamination of 3-amino-2,3-dideoxy-scyllo-inosose (keto-2-DOIA) into 2-deoxystreptamine (2-DOS). The chain is L-glutamine:2-deoxy-scyllo-inosose aminotransferase (gntA) from Micromonospora echinospora (Micromonospora purpurea).